The following is a 256-amino-acid chain: MLRIADKTFDSHLFTGTGKFASSQLMVEAIRASGSQLVTLAMKRVDLRQHNDAILAPLIEAGVTLLPNTSGAKTAEEAIFAAQLALEALGTHWLKLEIHPDARWLLPDPIETLKAAEALVKQGFVVLPYCGADPVLCKRLEEVGCAAVMPLGAPIGSNQGLETKAMLEIIIQQATVPVVVDAGIGVPSHAAQALEMGADAVLVNTAIAVADDPVMMATAFRLAVEAGLLARQAVPGNRSTYASATSPLTGFLEALA.

Lys-95 (schiff-base intermediate with DXP) is an active-site residue. Residues Gly-156, 182–183 (AG), and 204–205 (NT) contribute to the 1-deoxy-D-xylulose 5-phosphate site.

The protein belongs to the ThiG family. In terms of assembly, homotetramer. Forms heterodimers with either ThiH or ThiS.

The protein localises to the cytoplasm. It carries out the reaction [ThiS sulfur-carrier protein]-C-terminal-Gly-aminoethanethioate + 2-iminoacetate + 1-deoxy-D-xylulose 5-phosphate = [ThiS sulfur-carrier protein]-C-terminal Gly-Gly + 2-[(2R,5Z)-2-carboxy-4-methylthiazol-5(2H)-ylidene]ethyl phosphate + 2 H2O + H(+). It participates in cofactor biosynthesis; thiamine diphosphate biosynthesis. In terms of biological role, catalyzes the rearrangement of 1-deoxy-D-xylulose 5-phosphate (DXP) to produce the thiazole phosphate moiety of thiamine. Sulfur is provided by the thiocarboxylate moiety of the carrier protein ThiS. In vitro, sulfur can be provided by H(2)S. This Salmonella typhi protein is Thiazole synthase.